The following is a 173-amino-acid chain: Alpha-crystallin A chain (173 aa).

Methionine 1 carries the post-translational modification N-acetylmethionine. The sHSP domain maps to 52–162 (LFRTVLESGI…SHNERPIPVS (111 aa)). The Zn(2+) site is built by histidine 100, glutamate 102, histidine 107, and histidine 154. A disordered region spans residues 144–173 (PKVQSNTDPSHNERPIPVSREEKPTSAPPS). Residues 153–167 (SHNERPIPVSREEKP) are compositionally biased toward basic and acidic residues. Serine 162 carries an O-linked (GlcNAc) serine glycan.

The protein belongs to the small heat shock protein (HSP20) family. Heteropolymer composed of three CRYAA and one CRYAB subunits. Inter-subunit bridging via zinc ions enhances stability, which is crucial as there is no protein turn over in the lens. Can also form homodimers and homotetramers (dimers of dimers) which serve as the building blocks of homooligomers. Within homooligomers, the zinc-binding motif is created from residues of 3 different molecules. His-100 and Glu-102 from one molecule are ligands of the zinc ion, and His-107 and His-154 residues from additional molecules complete the site with tetrahedral coordination geometry.

It localises to the cytoplasm. The protein localises to the nucleus. Functionally, contributes to the transparency and refractive index of the lens. May act as a chaperone, preventing aggregation of various proteins under a wide range of stress conditions. This is Alpha-crystallin A chain (CRYAA) from Tupinambis teguixin (Golden tegu).